The following is a 272-amino-acid chain: Putative phosphoenolpyruvate synthase regulatory protein (272 aa).

152–159 is an ADP binding site; that stretch reads GVSRCGKT.

Belongs to the pyruvate, phosphate/water dikinase regulatory protein family. PSRP subfamily.

The enzyme catalyses [pyruvate, water dikinase] + ADP = [pyruvate, water dikinase]-phosphate + AMP + H(+). It carries out the reaction [pyruvate, water dikinase]-phosphate + phosphate + H(+) = [pyruvate, water dikinase] + diphosphate. In terms of biological role, bifunctional serine/threonine kinase and phosphorylase involved in the regulation of the phosphoenolpyruvate synthase (PEPS) by catalyzing its phosphorylation/dephosphorylation. This chain is Putative phosphoenolpyruvate synthase regulatory protein, found in Pseudomonas savastanoi pv. phaseolicola (strain 1448A / Race 6) (Pseudomonas syringae pv. phaseolicola (strain 1448A / Race 6)).